Here is a 496-residue protein sequence, read N- to C-terminus: MSAKFEISFSKSAKLTGGLAILLKTTDADSAAGAETVDPAGVIAKAARIARFSAKSMSALDIVAPEGASVERIVVIGLGKAADLTAHDWLKAGGTAAARIKNTDKTAVFIDVPGRETSARAAADFALGMLLRTYSFDTYKTKKNDDEEKAGKSVKVTIVTTDPAGAKKAFSDSEAIAGGVNLARDLVNEPPNVLGPVEFAAKAKELEKLGIEVEILTEKEMRRFGMGALLGVAQGSVRPPRLAVMQWKGGKAKDRPVAFIGKGVVFDTGGISIKPAAGMEDMKGDMGGAAAVTGLMHVLASRKAAVNAVGIIGLVENMPDGNAQRPGDIVTSMSGQTIEVINTDAEGRLVLCDALWYCNDRFKPQFMINLATLTGAIVVALGNVHAGLFSNDDQLSAQLTEAGLSTNEKLWRMPLGKDYDKLIDSKFADMKNTGGRQAGSITAAHFIKRFVQDTPWAHLDIAGTAMGSPQDEINQSWGSGFGVRLLDELVRAHYES.

Positions 262 and 267 each coordinate Mn(2+). The active site involves K274. Residues D285, D344, and E346 each coordinate Mn(2+). R348 is a catalytic residue.

It belongs to the peptidase M17 family. Requires Mn(2+) as cofactor.

It is found in the cytoplasm. It carries out the reaction Release of an N-terminal amino acid, Xaa-|-Yaa-, in which Xaa is preferably Leu, but may be other amino acids including Pro although not Arg or Lys, and Yaa may be Pro. Amino acid amides and methyl esters are also readily hydrolyzed, but rates on arylamides are exceedingly low.. It catalyses the reaction Release of an N-terminal amino acid, preferentially leucine, but not glutamic or aspartic acids.. Functionally, presumably involved in the processing and regular turnover of intracellular proteins. Catalyzes the removal of unsubstituted N-terminal amino acids from various peptides. This is Probable cytosol aminopeptidase from Rhizobium leguminosarum bv. trifolii (strain WSM2304).